Reading from the N-terminus, the 773-residue chain is Elongin-A (773 aa).

One can recognise a TFIIS N-terminal domain in the interval 4 to 79 (ESALQVVEKL…AQWKKLVPVE (76 aa)). Basic and acidic residues predominate over residues 79–93 (ERNNEAEDQDFEKSN). Residues 79–480 (ERNNEAEDQD…PRKVPTDVLP (402 aa)) form a disordered region. Residues 112–124 (YQESWQASGSQPY) show a composition bias toward polar residues. Basic and acidic residues predominate over residues 136–156 (LPELERPHKVAHGHERRDERK). The span at 162 to 174 (SPPYSSDPESSDY) shows a compositional bias: low complexity. S195 is subject to Phosphoserine. Positions 239 to 248 (KPHKSSHKEK) are enriched in basic residues. 2 stretches are compositionally biased toward basic and acidic residues: residues 249–265 (RPVDARGDEKSSVMGRE) and 271–304 (SSKEESRRLLSEDSAKEKLPSSVVKKEKDREGNS). The residue at position 310 (S310) is a Phosphoserine. Basic and acidic residues-rich tracts occupy residues 317–339 (SDNHFKKPKHKDSEKIKSDKNKQ) and 368–380 (QEGKVRTNSDRKS). Phosphoserine is present on residues S380 and S383. At K430 the chain carries N6-acetyllysine. Phosphoserine is present on S515. The segment at 521–680 (EAGFTGRRMN…PPRDVRRRQE (160 aa)) is activation domain. Positions 549–558 (TLHQQCIRVL) are BC-box. Residues 565–609 (IFEVGGVPYSVLEPVLERCTPDQLYRIEECNHVLIEETDQLWKVH) form the F-box domain. Residues 671-747 (PPRDVRRRQE…VASSSVSYDP (77 aa)) are disordered. Over residues 704–718 (SSHVPASNSSSSFHS) the composition is skewed to low complexity. Positions 728–744 (PSTSSAHLAPVASSSVS) are enriched in polar residues.

Heterotrimer of an A (ELOA, ELOA2 or ELOA3P), ELOB and ELOC subunit. Part of a multisubunit ubiquitin ligase complex consisting of elongin BC complex (ELOB and ELOC), elongin A/ELOA, RBX1 and CUL5. Interacts with ERCC6; the interaction is induced by DNA damaging agents or inhibitors of RNA polymerase II elongation. Interacts (via BC-box) with CUL5.

It localises to the nucleus. Functionally, SIII, also known as elongin, is a general transcription elongation factor that increases the RNA polymerase II transcription elongation past template-encoded arresting sites. Subunit A is transcriptionally active and its transcription activity is strongly enhanced by binding to the dimeric complex of the SIII regulatory subunits B and C (elongin BC complex). In terms of biological role, as part of a multisubunit complex composed of elongin BC complex (ELOB and ELOC), elongin A/ELOA, RBX1 and CUL5; polyubiquitinates monoubiquitinated POLR2A. This Rattus norvegicus (Rat) protein is Elongin-A (Eloa).